A 121-amino-acid chain; its full sequence is Chromosome transmission fidelity protein 8 homolog (121 aa).

It belongs to the CTF8 family. As to quaternary structure, component of the CTF18-RFC complex, which consists of CTF18, CTF8, DSCC1, RFC2, RFC3, RFC4 and RFC5. The CTF18-RFC complex does not interact with the Rad9/Rad1/Hus1 complex. The CTF18-RFC complex interacts with POLH. CTF18/CTF8/DSCC1 associate with PCNA. CTF8 exists as a dimer with DSCC1.

The protein localises to the nucleus. Chromosome cohesion factor involved in sister chromatid cohesion and fidelity of chromosome transmission. Component of one of the cell nuclear antigen loader complexes, CTF18-replication factor C (CTF18-RFC), which consists of CTF18, CTF8, DSCC1, RFC2, RFC3, RFC4 and RFC5. The CTF18-RFC complex binds to single-stranded and primed DNAs and has weak ATPase activity that is stimulated the presence of primed DNA, replication protein A (RPA) and proliferating cell nuclear antigen (PCNA). The CTF18-RFC complex catalyzes the ATP-dependent loading of PCNA onto primed and gapped DNA. It also interacts with and stimulates POLH, which is suggestive of a protein network that coordinates DNA repair, recombination and chromosome cohesion reactions with replication fork progression. The sequence is that of Chromosome transmission fidelity protein 8 homolog from Rattus norvegicus (Rat).